A 381-amino-acid polypeptide reads, in one-letter code: Dual specificity protein phosphatase 6 (381 aa).

The Rhodanese domain occupies 30-148 (GNERLLLMDC…FQAEFSLHCE (119 aa)). The disordered stretch occupies residues 176–203 (SSSDIESDLDRDPNSATDSDGSPLSNSQ). Residues 189–203 (NSATDSDGSPLSNSQ) show a composition bias toward polar residues. In terms of domain architecture, Tyrosine-protein phosphatase spans 206-349 (FPVEILPFLY…LLDFERTLGL (144 aa)). Cysteine 293 (phosphocysteine intermediate) is an active-site residue.

Belongs to the protein-tyrosine phosphatase family. Non-receptor class dual specificity subfamily. As to quaternary structure, interacts with MAPK1/ERK2. In terms of processing, ubiquitinated by the SCF(FBXO31) complex, leading to its proteasomal degradation. As to expression, expressed in keratinocytes (at protein level).

It is found in the cytoplasm. It carries out the reaction O-phospho-L-tyrosyl-[protein] + H2O = L-tyrosyl-[protein] + phosphate. It catalyses the reaction O-phospho-L-seryl-[protein] + H2O = L-seryl-[protein] + phosphate. The catalysed reaction is O-phospho-L-threonyl-[protein] + H2O = L-threonyl-[protein] + phosphate. Its function is as follows. Dual specificity protein phosphatase, which mediates dephosphorylation and inactivation of MAP kinases. Has a specificity for the ERK family. Plays an important role in alleviating chronic postoperative pain. Necessary for the normal dephosphorylation of the long-lasting phosphorylated forms of spinal MAPK1/3 and MAP kinase p38 induced by peripheral surgery, which drives the resolution of acute postoperative allodynia. Also important for dephosphorylation of MAPK1/3 in local wound tissue, which further contributes to resolution of acute pain. Promotes cell differentiation by regulating MAPK1/MAPK3 activity and regulating the expression of AP1 transcription factors. The sequence is that of Dual specificity protein phosphatase 6 (DUSP6) from Homo sapiens (Human).